Consider the following 3590-residue polypeptide: Filamentous hemagglutinin (3590 aa).

Disordered stretches follow at residues 3256–3309 and 3417–3498; these read GGGS…VEVS and APPP…GRHV. The segment covering 3289 to 3299 has biased composition (pro residues); the sequence is PSRPTTPPASP. The span at 3300–3309 shows a compositional bias: low complexity; it reads QPIRATVEVS. The segment covering 3417–3432 has biased composition (pro residues); it reads APPPVVETAQPLPPVK.

The protein localises to the cell surface. Its function is as follows. Evidence for a role in host-cell binding and infection. The protein is Filamentous hemagglutinin (fhaB) of Bordetella pertussis (strain Tohama I / ATCC BAA-589 / NCTC 13251).